The sequence spans 379 residues: GDSL esterase/lipase At3g05180 (379 aa).

Positions 1 to 27 are cleaved as a signal peptide; the sequence is METLFHTLLRLLLFVAISHTLSPLAGS. The active-site Nucleophile is serine 43. N-linked (GlcNAc...) asparagine glycans are attached at residues asparagine 294 and asparagine 330. Residues aspartate 349 and histidine 352 contribute to the active site.

This sequence belongs to the 'GDSL' lipolytic enzyme family.

The protein resides in the secreted. This Arabidopsis thaliana (Mouse-ear cress) protein is GDSL esterase/lipase At3g05180.